Reading from the N-terminus, the 546-residue chain is 6'''-hydroxyparomomycin C oxidase (546 aa).

The interval 1-30 is disordered; that stretch reads MERLRGPSPLENTTARHPAPLGPAHRDGLE. Histidine 475 serves as the catalytic Proton acceptor.

The protein belongs to the GMC oxidoreductase family. It depends on FAD as a cofactor.

It participates in antibiotic biosynthesis; lividomycin biosynthesis. Glucosaminyl-6'-oxidase involved in the biosynthetic pathway of lividomycin by mediating FAD-dependent dehydrogenation of 6'''-hydroxyparomomycin to paromomycin. In Streptomyces lividus, this protein is 6'''-hydroxyparomomycin C oxidase (livQ).